Here is a 661-residue protein sequence, read N- to C-terminus: UvrABC system protein B (661 aa).

The Helicase ATP-binding domain occupies 25 to 182 (KGLNNKKRSQ…NDLVNLQYER (158 aa)). Residue 38–45 (GITGSGKT) coordinates ATP. The short motif at 91–114 (YYDYYQPEAYIPKTDVFIEKDSSI) is the Beta-hairpin element. The Helicase C-terminal domain maps to 430-592 (QVEDLVGEIQ…IIPKTINRTI (163 aa)). Residues 621–656 (KAHIDKLRKEMLKAASNLEFEQAAKLRDQLKTLEEA) enclose the UVR domain.

Belongs to the UvrB family. In terms of assembly, forms a heterotetramer with UvrA during the search for lesions. Interacts with UvrC in an incision complex.

Its subcellular location is the cytoplasm. Functionally, the UvrABC repair system catalyzes the recognition and processing of DNA lesions. A damage recognition complex composed of 2 UvrA and 2 UvrB subunits scans DNA for abnormalities. Upon binding of the UvrA(2)B(2) complex to a putative damaged site, the DNA wraps around one UvrB monomer. DNA wrap is dependent on ATP binding by UvrB and probably causes local melting of the DNA helix, facilitating insertion of UvrB beta-hairpin between the DNA strands. Then UvrB probes one DNA strand for the presence of a lesion. If a lesion is found the UvrA subunits dissociate and the UvrB-DNA preincision complex is formed. This complex is subsequently bound by UvrC and the second UvrB is released. If no lesion is found, the DNA wraps around the other UvrB subunit that will check the other stand for damage. In Rickettsia bellii (strain OSU 85-389), this protein is UvrABC system protein B.